A 662-amino-acid polypeptide reads, in one-letter code: UvrABC system protein B (662 aa).

The region spanning 25–411 (DGIIAGDKFQ…STRIVEQVIR (387 aa)) is the Helicase ATP-binding domain. Residue 38–45 (GVTGSGKT) coordinates ATP. The Beta-hairpin signature appears at 91–114 (YYDYYQPEAYVPARDLYIEKDASI). A Helicase C-terminal domain is found at 428-594 (QMEHIYGEVK…TIKKAIEDIL (167 aa)). The UVR domain maps to 625–660 (KKLIKKLEAQMAEYADMLMFEEAAVIRDKIEEVKRI).

Belongs to the UvrB family. In terms of assembly, forms a heterotetramer with UvrA during the search for lesions. Interacts with UvrC in an incision complex.

The protein localises to the cytoplasm. The UvrABC repair system catalyzes the recognition and processing of DNA lesions. A damage recognition complex composed of 2 UvrA and 2 UvrB subunits scans DNA for abnormalities. Upon binding of the UvrA(2)B(2) complex to a putative damaged site, the DNA wraps around one UvrB monomer. DNA wrap is dependent on ATP binding by UvrB and probably causes local melting of the DNA helix, facilitating insertion of UvrB beta-hairpin between the DNA strands. Then UvrB probes one DNA strand for the presence of a lesion. If a lesion is found the UvrA subunits dissociate and the UvrB-DNA preincision complex is formed. This complex is subsequently bound by UvrC and the second UvrB is released. If no lesion is found, the DNA wraps around the other UvrB subunit that will check the other stand for damage. This chain is UvrABC system protein B, found in Treponema denticola (strain ATCC 35405 / DSM 14222 / CIP 103919 / JCM 8153 / KCTC 15104).